Reading from the N-terminus, the 183-residue chain is GTP cyclohydrolase 1 (183 aa).

Cys-71, His-74, and Cys-142 together coordinate Zn(2+).

It belongs to the GTP cyclohydrolase I family. Homomer.

The enzyme catalyses GTP + H2O = 7,8-dihydroneopterin 3'-triphosphate + formate + H(+). It participates in cofactor biosynthesis; 7,8-dihydroneopterin triphosphate biosynthesis; 7,8-dihydroneopterin triphosphate from GTP: step 1/1. The protein is GTP cyclohydrolase 1 of Leptospira biflexa serovar Patoc (strain Patoc 1 / Ames).